The following is a 425-amino-acid chain: Dihydroorotase (425 aa).

2 residues coordinate Zn(2+): H56 and H58. Residues 58–60 (HYR) and N90 each bind substrate. Zn(2+)-binding residues include D148, H175, and H228. Residue N274 coordinates substrate. Residue D301 participates in Zn(2+) binding. Residue D301 is part of the active site. Residues H305 and 319 to 320 (FG) each bind substrate.

It belongs to the metallo-dependent hydrolases superfamily. DHOase family. Class I DHOase subfamily. Zn(2+) serves as cofactor.

It carries out the reaction (S)-dihydroorotate + H2O = N-carbamoyl-L-aspartate + H(+). Its pathway is pyrimidine metabolism; UMP biosynthesis via de novo pathway; (S)-dihydroorotate from bicarbonate: step 3/3. Its function is as follows. Catalyzes the reversible cyclization of carbamoyl aspartate to dihydroorotate. In Lactobacillus helveticus (strain DPC 4571), this protein is Dihydroorotase.